Here is a 147-residue protein sequence, read N- to C-terminus: Transcriptional regulator MraZ (147 aa).

2 consecutive SpoVT-AbrB domains span residues 5 to 50 and 79 to 122; these read AIAL…PLSA and AQEE…SDAG.

Belongs to the MraZ family. In terms of assembly, forms oligomers.

It is found in the cytoplasm. It localises to the nucleoid. This chain is Transcriptional regulator MraZ, found in Aromatoleum aromaticum (strain DSM 19018 / LMG 30748 / EbN1) (Azoarcus sp. (strain EbN1)).